The following is a 437-amino-acid chain: Xylose isomerase (437 aa).

Residues His-102 and Asp-105 contribute to the active site. The Mg(2+) site is built by Glu-233, Glu-269, His-272, Asp-297, Asp-308, Asp-310, and Asp-340.

The protein belongs to the xylose isomerase family. Homotetramer. Mg(2+) is required as a cofactor.

It localises to the cytoplasm. It carries out the reaction alpha-D-xylose = alpha-D-xylulofuranose. This is Xylose isomerase from Novosphingobium aromaticivorans (strain ATCC 700278 / DSM 12444 / CCUG 56034 / CIP 105152 / NBRC 16084 / F199).